The chain runs to 468 residues: MEETKVKRTCLERTVCSSKAKEDLISQLPDSLITQILFYLQTKKAVTTSVLSKRWRSLWLSTPGLVLISNDFTDYNAFVSFVDKFLGFSREQKLCLHKLKLSIRKGENDQDCVTRWIDFVATPKLKHLDVEIGPTRCECFEVIPLSLYSCESLLYLRLNHVCLGKFESVSLPCLKTMSLEQNIYANEADLESLISTCPVLEDLSFVSGAYDKVNVLRVQSQTLTSLNIEGCVEYLDLDKSEVLIDATRLKYLNLEADQYESKTIRNSGSLTKVNLLGYFHMKNNDDDDEVDLQKRDMVHNFFTSISGVSDMKISSQAFALFIMNTMPFSPKFCNLSCLEVEIFLPSLETLPTFLESFPNLKSLILGLRYWTPKKELRLSFVPRCLLSSLEFVEIKGCSRSNMERVKYVGEPIETKLARYFVENSTILKKLVLPLRSSTPEEIYSVDFWNFLEFPRRSSICQITYVAGL.

Residues 22–68 (EDLISQLPDSLITQILFYLQTKKAVTTSVLSKRWRSLWLSTPGLVLI) form the F-box domain. Residues 375 to 433 (ELRLSFVPRCLLSSLEFVEIKGCSRSNMERVKYVGEPIETKLARYFVENSTILKKLVLP) enclose the FBD domain.

This is Putative FBD-associated F-box protein At5g22720 from Arabidopsis thaliana (Mouse-ear cress).